Here is a 190-residue protein sequence, read N- to C-terminus: dCTP deaminase, dUMP-forming (190 aa).

Residues 101 to 106 (KSSLGR), aspartate 119, 127 to 129 (TLE), glutamine 148, tyrosine 162, and glutamine 174 each bind dCTP. Glutamate 129 acts as the Proton donor/acceptor in catalysis. Residues 163–190 (GSSQVGSKYQGQRGPTPSKSYQNFVKSN) form a disordered region.

Belongs to the dCTP deaminase family. Homotrimer.

The enzyme catalyses dCTP + 2 H2O = dUMP + NH4(+) + diphosphate. It functions in the pathway pyrimidine metabolism; dUMP biosynthesis; dUMP from dCTP: step 1/1. In terms of biological role, bifunctional enzyme that catalyzes both the deamination of dCTP to dUTP and the hydrolysis of dUTP to dUMP without releasing the toxic dUTP intermediate. In Mycolicibacterium gilvum (strain PYR-GCK) (Mycobacterium gilvum (strain PYR-GCK)), this protein is dCTP deaminase, dUMP-forming.